We begin with the raw amino-acid sequence, 268 residues long: Tryptophan synthase alpha chain (268 aa).

Catalysis depends on proton acceptor residues Glu49 and Asp60.

The protein belongs to the TrpA family. In terms of assembly, tetramer of two alpha and two beta chains.

It carries out the reaction (1S,2R)-1-C-(indol-3-yl)glycerol 3-phosphate + L-serine = D-glyceraldehyde 3-phosphate + L-tryptophan + H2O. It functions in the pathway amino-acid biosynthesis; L-tryptophan biosynthesis; L-tryptophan from chorismate: step 5/5. Its function is as follows. The alpha subunit is responsible for the aldol cleavage of indoleglycerol phosphate to indole and glyceraldehyde 3-phosphate. In Aeromonas hydrophila subsp. hydrophila (strain ATCC 7966 / DSM 30187 / BCRC 13018 / CCUG 14551 / JCM 1027 / KCTC 2358 / NCIMB 9240 / NCTC 8049), this protein is Tryptophan synthase alpha chain.